Here is a 545-residue protein sequence, read N- to C-terminus: Membrane protein insertase YidC (545 aa).

Transmembrane regions (helical) follow at residues 10–30, 319–339, 341–361, 407–427, 467–487, and 502–522; these read AVYL…FLFS, LLYF…NVIP, WGLS…PLTF, IGGC…YGLV, ILPF…SNVS, and MPIM…IYWI.

It belongs to the OXA1/ALB3/YidC family. Type 1 subfamily. As to quaternary structure, interacts with the Sec translocase complex via SecD. Specifically interacts with transmembrane segments of nascent integral membrane proteins during membrane integration.

Its subcellular location is the cell inner membrane. Functionally, required for the insertion and/or proper folding and/or complex formation of integral membrane proteins into the membrane. Involved in integration of membrane proteins that insert both dependently and independently of the Sec translocase complex, as well as at least some lipoproteins. Aids folding of multispanning membrane proteins. This chain is Membrane protein insertase YidC, found in Borrelia recurrentis (strain A1).